A 272-amino-acid chain; its full sequence is uncharacterized protein (272 aa).

6 helical membrane passes run 20–37 (VYLS…NLLI), 57–77 (HPLT…HFSL), 97–119 (LNVS…IMLM), 155–177 (SIAT…YVIF), 184–203 (LVSL…VTLG), and 234–256 (PYSI…WLVI).

It is found in the cell membrane. This is an uncharacterized protein from Halalkalibacterium halodurans (strain ATCC BAA-125 / DSM 18197 / FERM 7344 / JCM 9153 / C-125) (Bacillus halodurans).